Here is an 85-residue protein sequence, read N- to C-terminus: uncharacterized protein (85 aa).

The segment at Glu44–Asn85 is disordered. Residues His50–Gln60 show a composition bias toward polar residues. Residues Glu68 to Asn85 show a composition bias toward acidic residues.

This is an uncharacterized protein from Haloarcula hispanica (His1V).